The following is a 1365-amino-acid chain: MKNHLSNVLCAMRSDFKDNHQETINKMIQFGTVKYGIVKQLKDRARSADKDIGSDQEENGGCSPLTTATTTASPSRSPEPEEEQPEEQSTSEQSIPEQSTPDHQLENDIKSEAKSEIEPVEDNNNRVAMTKPSSEEREPNASGSMPSSPVAEASAEEAATERTPEKEKEKDVEVDVEKPDEAPSSAVPSTEVTLPGGAGAPVTLEAIQNMQMAIAQFAAKTIANGSNGADNEAAMKQLAFLQQTLFNLQQQQLFQIQLIQQLQSQLALNQAKQEEDTEEDADQEQDQEQETDTYEEEERIADMELRQKAEARMAEAKARQHLINAGVPLRESSGSPAESLKRRREHDHESQPNRRPSLDNTHKADTAQDALAKLKEMENTPLPFGSDLASSIITNHDDLPEPNSLDLLQKRAQEVLDSASQGILANSMADDFAFGEKSGEGKGRNEPFFKHRCRYCGKVFGSDSALQIHIRSHTGERPFKCNVCGSRFTTKGNLKVHFQRHAQKFPHVPMNATPIPEHMDKFHPPLLDQMSPTDSSPNHSPAPPPLGSAPASFPPAFPGLQNLYRPPMEILKSLGAAAPHQYFPQELPTDLRKPSPQLDEDEPQVKNEPVEEKDQREEHEQEMAECSEPEPEPLPLEVRIKEERVEEQEQVKQEDHRIEPRRTPSPSSEHRSPHHHRHSHMGYPPVVQPIQPAALMHPQSSPGSQSHLDHLPTPGQLPPREDFFAERFPLNFTTAKMLSPEHHSPVRSPAGGALPPGVPPPPHHHPHHMARSPFFNPIKHEMAALLPRPHSNDNSWENFIEVSNTCETMKLKELMKNKKISDPNQCVVCDRVLSCKSALQMHYRTHTGERPFKCRICGRAFTTKGNLKTHMAVHKIRPPMRNFHQCPVCHKKYSNALVLQQHIRLHTGEPTDLTPEQIQAAEIRDPPPSMMPGHFMNPFAAAAFHFGALPGGPGGPPGPNHGAHNGALGSESSQGDMDDNMDCGEDYDDDVSSEHLSNSNLEQEGDRSRSGDDFKSLLFEQKLRIDATGVVNTNPVRPRSSASSHGHSVGSTSAPTSPSVHASSQVIKRSSSPARSEASQGALDLTPRAAPTSSSSSRSPLPKEKPVSPPSLPRSPSGSSHASANILTSPLPPTVGIDCLPPGLQHHLQQQHQHLMQQQAAVAAAAAAQHHHHQQMAALHQHQEQLRREAAEAQQKAAAAAAAAAAAAAAQRQTPPQARDQRQEGGPGAGPPPNPLMGARPPFGMFPNLPLFPPATTQNMCNAMNQIAQSVMPAAPFNPLALSGVRGSTTCGICYKTFPCHSALEIHYRSHTKERPFKCSICDRGFTTKGNLKQHMLTHKIRDMEQETFRNRAVKYMSEWNEDRE.

3 disordered regions span residues 47–194 (SADK…EVTL), 270–298 (QAKQEEDTEEDADQEQDQEQETDTYEEEE), and 322–363 (LINA…NTHK). 2 stretches are compositionally biased toward low complexity: residues 63 to 76 (SPLTTATTTASPSR) and 87 to 99 (EQSTSEQSIPEQS). Basic and acidic residues predominate over residues 103-117 (HQLENDIKSEAKSEI). A compositionally biased stretch (low complexity) spans 146–157 (PSSPVAEASAEE). Residues 159-181 (ATERTPEKEKEKDVEVDVEKPDE) show a composition bias toward basic and acidic residues. Acidic residues predominate over residues 275–298 (EDTEEDADQEQDQEQETDTYEEEE). A compositionally biased stretch (basic and acidic residues) spans 346-363 (HDHESQPNRRPSLDNTHK). 2 C2H2-type zinc fingers span residues 451–473 (HRCRYCGKVFGSDSALQIHIRSH) and 479–501 (FKCNVCGSRFTTKGNLKVHFQRH). Disordered regions lie at residues 508 to 554 (VPMN…ASFP) and 586 to 716 (ELPT…TPGQ). Positions 530-539 (MSPTDSSPNH) are enriched in polar residues. Pro residues predominate over residues 540–554 (SPAPPPLGSAPASFP). Basic and acidic residues-rich tracts occupy residues 603–622 (PQVKNEPVEEKDQREEHEQE) and 638–662 (VRIKEERVEEQEQVKQEDHRIEPRR). Phosphoserine is present on residues Ser-739 and Ser-744. Positions 740–772 (PEHHSPVRSPAGGALPPGVPPPPHHHPHHMARS) are disordered. C2H2-type zinc fingers lie at residues 824-846 (NQCVVCDRVLSCKSALQMHYRTH), 852-874 (FKCRICGRAFTTKGNLKTHMAVH), and 884-906 (HQCPVCHKKYSNALVLQQHIRLH). Disordered stretches follow at residues 948 to 1012 (ALPG…RSGD), 1030 to 1129 (VVNT…ILTS), and 1146 to 1241 (HHLQ…GARP). Over residues 976–991 (DMDDNMDCGEDYDDDV) the composition is skewed to acidic residues. The span at 1040–1054 (SSASSHGHSVGSTSA) shows a compositional bias: low complexity. A compositionally biased stretch (polar residues) spans 1055–1079 (PTSPSVHASSQVIKRSSSPARSEAS). A phosphoserine mark is found at Ser-1076 and Ser-1079. Composition is skewed to low complexity over residues 1085-1100 (LTPRAAPTSSSSSRSP), 1114-1123 (RSPSGSSHAS), and 1146-1168 (HHLQQQHQHLMQQQAAVAAAAAA). Over residues 1181-1191 (QHQEQLRREAA) the composition is skewed to basic and acidic residues. Residues 1192-1218 (EAQQKAAAAAAAAAAAAAAQRQTPPQA) are compositionally biased toward low complexity. C2H2-type zinc fingers lie at residues 1289 to 1311 (TTCGICYKTFPCHSALEIHYRSH) and 1317 to 1339 (FKCSICDRGFTTKGNLKQHMLTH).

This sequence belongs to the sal C2H2-type zinc-finger protein family.

Its subcellular location is the nucleus. Required for the establishment of the posterior-most head and the anterior-most tail segments of the embryo. Probably function as a transcriptional regulator. Could repress the transcription of the tsh gene. The chain is Homeotic protein spalt-major (salm) from Drosophila melanogaster (Fruit fly).